The sequence spans 1054 residues: Bifunctional glutamine synthetase adenylyltransferase/adenylyl-removing enzyme (1054 aa).

Positions 1–535 (MRKTLPSIGA…LHRKLFYRPL (535 aa)) are adenylyl removase. Polar residues-rich tracts occupy residues 138–150 (SFSS…QGSD) and 165–175 (DTANTDLSTPG). A disordered region spans residues 138-175 (SFSSESQQPQGSDSDSEFSFGADLSADDTANTDLSTPG). The interval 541 to 1054 (NISVGTLKLS…WGVDSIEHDY (514 aa)) is adenylyl transferase.

This sequence belongs to the GlnE family. Mg(2+) serves as cofactor.

The catalysed reaction is [glutamine synthetase]-O(4)-(5'-adenylyl)-L-tyrosine + phosphate = [glutamine synthetase]-L-tyrosine + ADP. It carries out the reaction [glutamine synthetase]-L-tyrosine + ATP = [glutamine synthetase]-O(4)-(5'-adenylyl)-L-tyrosine + diphosphate. Functionally, involved in the regulation of glutamine synthetase GlnA, a key enzyme in the process to assimilate ammonia. When cellular nitrogen levels are high, the C-terminal adenylyl transferase (AT) inactivates GlnA by covalent transfer of an adenylyl group from ATP to specific tyrosine residue of GlnA, thus reducing its activity. Conversely, when nitrogen levels are low, the N-terminal adenylyl removase (AR) activates GlnA by removing the adenylyl group by phosphorolysis, increasing its activity. The regulatory region of GlnE binds the signal transduction protein PII (GlnB) which indicates the nitrogen status of the cell. This is Bifunctional glutamine synthetase adenylyltransferase/adenylyl-removing enzyme from Corynebacterium diphtheriae (strain ATCC 700971 / NCTC 13129 / Biotype gravis).